A 309-amino-acid chain; its full sequence is Probable sugar phosphate/phosphate translocator At5g05820 (309 aa).

10 consecutive transmembrane segments (helical) span residues 9–29 (FFTI…LLLN), 42–62 (IFLT…AIAW), 77–97 (FFKI…GNIS), 100–120 (FLPV…TAVF), 130–150 (AWLT…ASGG), 154–174 (FHLF…LKSV), 192–212 (LLLY…LIME), 229–249 (IVWY…TNFL), 256–278 (ALTL…ILIF), and 282–301 (VSVT…ILYS). In terms of domain architecture, EamA spans 30-147 (KYLLSNYGFK…VPVVTGVVIA (118 aa)).

It belongs to the TPT transporter family. TPT (TC 2.A.7.9) subfamily.

The protein resides in the membrane. The protein is Probable sugar phosphate/phosphate translocator At5g05820 of Arabidopsis thaliana (Mouse-ear cress).